The following is a 446-amino-acid chain: Exodeoxyribonuclease 7 large subunit (446 aa).

This sequence belongs to the XseA family. Heterooligomer composed of large and small subunits.

The protein localises to the cytoplasm. It carries out the reaction Exonucleolytic cleavage in either 5'- to 3'- or 3'- to 5'-direction to yield nucleoside 5'-phosphates.. Its function is as follows. Bidirectionally degrades single-stranded DNA into large acid-insoluble oligonucleotides, which are then degraded further into small acid-soluble oligonucleotides. In Xanthomonas campestris pv. campestris (strain B100), this protein is Exodeoxyribonuclease 7 large subunit.